Here is a 138-residue protein sequence, read N- to C-terminus: Protein X (138 aa).

The segment at 20 to 43 (PLRGQPSGPSVSGTSAGSPSSAAS) is disordered. Positions 25–43 (PSGPSVSGTSAGSPSSAAS) are enriched in low complexity. Residues 68–113 (PCCLGFTCADLRTMDSTVNFVPWHAKRQLGMMQKDFWTAYIRDQLL) form a mitochondrial targeting sequence region.

It belongs to the orthohepadnavirus protein X family. In terms of assembly, may form homodimer. May interact with host CEBPA, CFLAR, CREB1, DDB1, E4F1, HBXIP, HSPD1/HSP60, NFKBIA, POLR2E and SMAD4. Interacts with host SMC5-SMC6 complex and induces its degradation. Interacts with host TRPC4AP; leading to prevent ubiquitination of TRPC4AP. Interacts with host PLSCR1; this interaction promotes ubiquitination and degradation of HBx and impairs HBx-mediated cell proliferation. Post-translationally, a fraction may be phosphorylated in insect cells and HepG2 cells, a human hepatoblastoma cell line. Phosphorylated in vitro by host protein kinase C or mitogen-activated protein kinase. N-acetylated in insect cells.

It localises to the host cytoplasm. Its subcellular location is the host nucleus. The protein resides in the host mitochondrion. In terms of biological role, multifunctional protein that plays a role in silencing host antiviral defenses and promoting viral transcription. Does not seem to be essential for HBV infection. May be directly involved in development of cirrhosis and liver cancer (hepatocellular carcinoma). Most of cytosolic activities involve modulation of cytosolic calcium. The effect on apoptosis is controversial depending on the cell types in which the studies have been conducted. May induce apoptosis by localizing in mitochondria and causing loss of mitochondrial membrane potential. May also modulate apoptosis by binding host CFLAR, a key regulator of the death-inducing signaling complex (DISC). Promotes viral transcription by using the host E3 ubiquitin ligase DDB1 to target the SMC5-SMC6 complex to proteasomal degradation. This host complex would otherwise bind to viral episomal DNA, and prevents its transcription. Moderately stimulates transcription of many different viral and cellular transcription elements. Promoters and enhancers stimulated by HBx contain DNA binding sites for NF-kappa-B, AP-1, AP-2, c-EBP, ATF/CREB, or the calcium-activated factor NF-AT. This chain is Protein X, found in Ground squirrel hepatitis virus (strain 27) (GSHV).